Reading from the N-terminus, the 212-residue chain is Methylthioribulose-1-phosphate dehydratase (212 aa).

The Zn(2+) site is built by His98 and His100.

The protein belongs to the aldolase class II family. MtnB subfamily. Requires Zn(2+) as cofactor.

It carries out the reaction 5-(methylsulfanyl)-D-ribulose 1-phosphate = 5-methylsulfanyl-2,3-dioxopentyl phosphate + H2O. The protein operates within amino-acid biosynthesis; L-methionine biosynthesis via salvage pathway; L-methionine from S-methyl-5-thio-alpha-D-ribose 1-phosphate: step 2/6. In terms of biological role, catalyzes the dehydration of methylthioribulose-1-phosphate (MTRu-1-P) into 2,3-diketo-5-methylthiopentyl-1-phosphate (DK-MTP-1-P). This chain is Methylthioribulose-1-phosphate dehydratase, found in Picosynechococcus sp. (strain ATCC 27264 / PCC 7002 / PR-6) (Agmenellum quadruplicatum).